Reading from the N-terminus, the 148-residue chain is Large ribosomal subunit protein uL15 (148 aa).

The span at 1–28 (MIRRRKKVRKLRGSHTHGWGCKKKHRGG) shows a compositional bias: basic residues. The segment at 1 to 43 (MIRRRKKVRKLRGSHTHGWGCKKKHRGGGSKGGRGMAGTGKRK) is disordered. A compositionally biased stretch (gly residues) spans 29 to 38 (GSKGGRGMAG).

Belongs to the universal ribosomal protein uL15 family. As to quaternary structure, part of the 50S ribosomal subunit.

In terms of biological role, binds to the 23S rRNA. The polypeptide is Large ribosomal subunit protein uL15 (Thermococcus kodakarensis (strain ATCC BAA-918 / JCM 12380 / KOD1) (Pyrococcus kodakaraensis (strain KOD1))).